A 215-amino-acid polypeptide reads, in one-letter code: uncharacterized protein (215 aa).

Catalysis depends on charge relay system residues Ser-114, Asp-162, and His-194.

It belongs to the AB hydrolase superfamily. AB hydrolase 2 family.

This is an uncharacterized protein from Rickettsia prowazekii (strain Madrid E).